A 380-amino-acid polypeptide reads, in one-letter code: Ceramide synthase 2 (380 aa).

Topologically, residues 1–40 (MLQTLYDYFWWERLWLPVNLTWADLEDRDGRVYAKASDLY) are lumenal. The N-linked (GlcNAc...) asparagine glycan is linked to Asn-19. The chain crosses the membrane as a helical span at residues 41 to 61 (ITLPLALLFLIVRYFFELYVA). Residues 67–128 (LLNIKEKTRL…RRRRNQDRPS (62 aa)) are homeobox-like. The TLC domain maps to 131 to 332 (KKFREASWRF…ILRMAHKFIT (202 aa)). 4 consecutive transmembrane segments (helical) span residues 140–160 (FTFYLIAFIAGMAVIVDKPWF), 181–201 (WYYMIELSFYWSLLFSIASDV), 209–229 (QIIHHVATIILISFSWFANYI), and 264–284 (IFIVFAIVFIITRLVILPFWI). The Last loop motif motif lies at 291–300 (YPLELYPAFF). Residues 304–324 (FFNSMMGVLQLLHIFWAYLIL) form a helical membrane-spanning segment. Residues 325 to 380 (RMAHKFITGKLVEDERSDREETESSEGEEAAAGGGAKSRPLANGHPILNNNHRKND) lie on the Cytoplasmic side of the membrane. Residues 338-380 (DERSDREETESSEGEEAAAGGGAKSRPLANGHPILNNNHRKND) form a disordered region. Ser-341 carries the post-translational modification Phosphoserine. Acidic residues predominate over residues 344-353 (EETESSEGEE). Residue Thr-346 is modified to Phosphothreonine. Phosphoserine is present on residues Ser-348 and Ser-349.

In terms of assembly, interacts with ATP6V0C, ASGR1, ASGR2 and SLC22A1/OCT1. Interacts with ELOV1, HSD17B12 and TECR. Interacts with NDUFS2. Interacts with PAQR4; the interaction regulates the stability and activity of CERS2 and is inhibited in presence of ceramides. Post-translationally, acetylated. Deacetylation by SIRT3 increases enzyme activity and promotes mitochondrial ceramide accumulation. In terms of processing, phosphorylated at the C-terminus by CK2, leading to increase the ceramide synthase activity. Expressed in kidney, liver, brain, heart, placenta and lung.

It is found in the endoplasmic reticulum membrane. It catalyses the reaction a very long-chain fatty acyl-CoA + a sphingoid base = an N-(very-long-chain fatty acyl)-sphingoid base + CoA + H(+). The enzyme catalyses docosanoyl-CoA + sphinganine = N-docosanoylsphinganine + CoA + H(+). The catalysed reaction is tetracosanoyl-CoA + sphinganine = N-tetracosanoylsphinganine + CoA + H(+). It carries out the reaction hexacosanoyl-CoA + sphinganine = N-hexacosanoylsphinganine + CoA + H(+). It catalyses the reaction (15Z)-tetracosenoyl-CoA + sphinganine = N-(15Z-tetracosenoyl)-sphinganine + CoA + H(+). The enzyme catalyses 2-hydroxytetracosanoyl-CoA + sphinganine = N-(2-hydroxytetracosanoyl)-sphinganine + CoA + H(+). The catalysed reaction is 2-hydroxydocosanoyl-CoA + sphinganine = N-(2-hydroxydocosanoyl)-sphinganine + CoA + H(+). It carries out the reaction 2-hydroxytetracosenoyl-CoA + sphinganine = N-(2-hydroxytetracosenoyl)-sphinganine + CoA + H(+). It catalyses the reaction tetracosenoyl-CoA + sphinganine = an N-tetracosenoylsphinganine + CoA + H(+). The enzyme catalyses hexacosenoyl-CoA + sphinganine = N-hexacosenoylsphinganine + CoA + H(+). The catalysed reaction is tetracosanoyl-CoA + sphing-4-enine = N-tetracosanoyl-sphing-4-enine + CoA + H(+). It carries out the reaction tetracosenoyl-CoA + sphing-4-enine = N-(tetracosenoyl)-sphing-4-enine + CoA + H(+). It catalyses the reaction heptadecasphing-4-enine + tetracosanoyl-CoA = N-tetracosanoyl-heptadecasphing-4-enine + CoA + H(+). The enzyme catalyses a fatty acyl-CoA + sphing-4-enine = an N-acylsphing-4-enine + CoA + H(+). The catalysed reaction is sphing-4-enine + hexadecanoyl-CoA = N-hexadecanoylsphing-4-enine + CoA + H(+). It carries out the reaction sphing-4-enine + octadecanoyl-CoA = N-octadecanoylsphing-4-enine + CoA + H(+). It catalyses the reaction eicosanoyl-CoA + sphing-4-enine = N-eicosanoyl-sphing-4-enine + CoA + H(+). The enzyme catalyses sphinganine + hexadecanoyl-CoA = N-hexadecanoylsphinganine + CoA + H(+). The catalysed reaction is sphinganine + octadecanoyl-CoA = N-(octadecanoyl)-sphinganine + CoA + H(+). It carries out the reaction sphinganine + (9Z)-octadecenoyl-CoA = N-(9Z-octadecenoyl)-sphinganine + CoA + H(+). It catalyses the reaction eicosanoyl-CoA + sphinganine = N-eicosanoylsphinganine + CoA + H(+). It participates in lipid metabolism; sphingolipid metabolism. Ceramide synthase activity is inhibited by sphingosine-1-phosphate. Functionally, ceramide synthase that catalyzes the transfer of the acyl chain from acyl-CoA to a sphingoid base, with high selectivity toward very-long-chain fatty acyl-CoA (chain length C22-C27). N-acylates sphinganine and sphingosine bases to form dihydroceramides and ceramides in de novo synthesis and salvage pathways, respectively. Plays a non-redundant role in the synthesis of ceramides with very-long-chain fatty acids in kidney, liver and brain. Regulates the abundance of myelin-specific sphingolipids galactosylceramide and sulfatide that affects myelin sheath architecture and motor neuron functions. The polypeptide is Ceramide synthase 2 (Homo sapiens (Human)).